The chain runs to 408 residues: MPGQTSAVAVLLCLAVILHGYQIREKEFPEARGYLQYTATTTEQITAKPPLPLTNQTSHATLASRSKDDYIQTAAETSTFEDTAHITMKTAIPVTTKSLLPISSTSYTFVRTNNSHMTASSTEDTIGSGSITHLPFPTTRASLAAVNHITGRSTQLGGQTTLPKALFTPSHESTTTQRPTLSTIVSELTPTGKDRSTTSSVPLVPRPTFVTWSSPAKIGTYEVLNGSRLCIKAEMGIALIVQEKGLDSATQRHFNIDPSLTHASGKCGSQNSNLFLNFQGGSVNVTFTKEENLYYVSEVGAYLTISNTEKTYQGKSTMMMFETVVGHSFKCVSEQSIQLSAQLQMKTMNIHLQAFDFEGDSFGIVDECLSDYTVVLPVVGIIVVVLCVVGLGIYKIRQRRQSSAYQRI.

A signal peptide spans 1–20 (MPGQTSAVAVLLCLAVILHG). Residues 21 to 373 (YQIREKEFPE…IVDECLSDYT (353 aa)) are Lumenal-facing. Residues Asn55 and Asn225 are each glycosylated (N-linked (GlcNAc...) asparagine). A disulfide bridge connects residues Cys230 and Cys267. The N-linked (GlcNAc...) asparagine glycan is linked to Asn284. Cys331 and Cys368 are joined by a disulfide. A helical transmembrane segment spans residues 374–394 (VVLPVVGIIVVVLCVVGLGIY). The Cytoplasmic portion of the chain corresponds to 395–408 (KIRQRRQSSAYQRI).

Belongs to the LAMP family. In terms of assembly, monomer. Interacts with FURIN.

The protein resides in the cell surface. It is found in the lysosome membrane. The protein localises to the cytoplasmic vesicle membrane. It localises to the early endosome membrane. In terms of biological role, lysosomal membrane glycoprotein which plays a role in the unfolded protein response (UPR) that contributes to protein degradation and cell survival during proteasomal dysfunction. Plays a role in the process of fusion of the lysosome with the autophagosome, thereby modulating the autophagic process. Promotes hepatocellular lipogenesis through activation of the PI3K/Akt pathway. May also play a role in dendritic cell function and in adaptive immunity. This is Lysosome-associated membrane glycoprotein 3 (Lamp3) from Rattus norvegicus (Rat).